We begin with the raw amino-acid sequence, 351 residues long: Ribosomal RNA small subunit methyltransferase H (351 aa).

S-adenosyl-L-methionine contacts are provided by residues 48–50 (GGY), D67, F94, D115, and Q122. Positions 298 to 351 (GPVLPSEAETEVNPRARSAKLRAGERTDGPAPPPLSAIETLASLPAPQGRGTRR) are disordered.

Belongs to the methyltransferase superfamily. RsmH family.

It localises to the cytoplasm. It catalyses the reaction cytidine(1402) in 16S rRNA + S-adenosyl-L-methionine = N(4)-methylcytidine(1402) in 16S rRNA + S-adenosyl-L-homocysteine + H(+). Functionally, specifically methylates the N4 position of cytidine in position 1402 (C1402) of 16S rRNA. In Methylorubrum populi (strain ATCC BAA-705 / NCIMB 13946 / BJ001) (Methylobacterium populi), this protein is Ribosomal RNA small subunit methyltransferase H.